We begin with the raw amino-acid sequence, 606 residues long: Aspartate--tRNA(Asp/Asn) ligase (606 aa).

An L-aspartate-binding site is contributed by glutamate 177. Positions 201–204 (QIFK) are aspartate. Arginine 223 is a binding site for L-aspartate. Residues 223 to 225 (RDE) and glutamine 232 each bind ATP. Histidine 461 is a binding site for L-aspartate. Position 499 (glutamate 499) interacts with ATP. Arginine 506 is an L-aspartate binding site. 551 to 554 (GLDR) is an ATP binding site.

This sequence belongs to the class-II aminoacyl-tRNA synthetase family. Type 1 subfamily. As to quaternary structure, homodimer.

It is found in the cytoplasm. It catalyses the reaction tRNA(Asx) + L-aspartate + ATP = L-aspartyl-tRNA(Asx) + AMP + diphosphate. Functionally, aspartyl-tRNA synthetase with relaxed tRNA specificity since it is able to aspartylate not only its cognate tRNA(Asp) but also tRNA(Asn). Reaction proceeds in two steps: L-aspartate is first activated by ATP to form Asp-AMP and then transferred to the acceptor end of tRNA(Asp/Asn). This chain is Aspartate--tRNA(Asp/Asn) ligase, found in Prochlorococcus marinus (strain MIT 9211).